The sequence spans 642 residues: Zinc finger protein 14 (642 aa).

One can recognise a KRAB domain in the interval 4-76 (VSFEDVAVNF…MVERLCESRK (73 aa)). The interval 77–99 (GSKCGETTSQMPNVNINKETSTG) is disordered. The span at 81–99 (GETTSQMPNVNINKETSTG) shows a compositional bias: polar residues. The C2H2-type 1 zinc finger occupies 103–125 (HECSFCGKDFMHHSSLNRHMRSH). A C2H2-type 2; degenerate zinc finger spans residues 141–163 (CKRKAVGKTFSYRHCVRKHERTH). The C2H2-type 3 zinc finger occupies 169–191 (YECKQCGKAFIYYQPFQRHERIH). The segment at 197–217 (YECKQCGKTFIYYQSFQKHAH) adopts a C2H2-type 4; atypical zinc-finger fold. C2H2-type zinc fingers lie at residues 223 to 245 (YECK…ERTH), 251 to 273 (YECK…ERTH), 279 to 301 (YKCK…KRTH), 307 to 329 (YECK…VITH), 335 to 357 (YKCK…ERTH), 363 to 385 (YECK…ERTH), 391 to 413 (YECK…ETTH), 419 to 441 (YECK…ERTH), 447 to 469 (YECK…ERSH), 475 to 497 (YECK…ERTH), 503 to 525 (YECK…EKIH), 531 to 553 (FECK…ERTH), 559 to 581 (YQCK…ERTH), 587 to 609 (YRCK…ERSH), and 615 to 637 (YECK…ERTH).

The protein belongs to the krueppel C2H2-type zinc-finger protein family.

It localises to the nucleus. Functionally, may be involved in transcriptional regulation. This is Zinc finger protein 14 (ZNF14) from Macaca fascicularis (Crab-eating macaque).